The chain runs to 178 residues: Endoribonuclease YbeY (178 aa).

Residues H118, H122, and H128 each coordinate Zn(2+). Positions 158 to 178 (ADRQSEKDRRLLDKSRYFDEP) are disordered.

The protein belongs to the endoribonuclease YbeY family. Zn(2+) serves as cofactor.

The protein resides in the cytoplasm. In terms of biological role, single strand-specific metallo-endoribonuclease involved in late-stage 70S ribosome quality control and in maturation of the 3' terminus of the 16S rRNA. The protein is Endoribonuclease YbeY of Mycolicibacterium smegmatis (strain ATCC 700084 / mc(2)155) (Mycobacterium smegmatis).